Reading from the N-terminus, the 149-residue chain is FAD synthase (149 aa).

ATP is bound by residues 9-10, 14-17, Asp-93, and Tyr-120; these read VF and HPGH.

It belongs to the archaeal FAD synthase family. Homodimer. The cofactor is a divalent metal cation.

The enzyme catalyses FMN + ATP + H(+) = FAD + diphosphate. The protein operates within cofactor biosynthesis; FAD biosynthesis; FAD from FMN: step 1/1. Its function is as follows. Catalyzes the transfer of the AMP portion of ATP to flavin mononucleotide (FMN) to produce flavin adenine dinucleotide (FAD) coenzyme. The polypeptide is FAD synthase (Aciduliprofundum boonei (strain DSM 19572 / T469)).